The chain runs to 608 residues: UvrABC system protein C (608 aa).

The region spanning 22-100 (EKPGIYQYLN…IKKYKPRYNV (79 aa)) is the GIY-YIG domain. In terms of domain architecture, UVR spans 214–249 (QEISRLLYQRMQDLAAEMKFEEAQKVKEKYALIENY).

This sequence belongs to the UvrC family. Interacts with UvrB in an incision complex.

Its subcellular location is the cytoplasm. The UvrABC repair system catalyzes the recognition and processing of DNA lesions. UvrC both incises the 5' and 3' sides of the lesion. The N-terminal half is responsible for the 3' incision and the C-terminal half is responsible for the 5' incision. The chain is UvrABC system protein C from Bacteroides fragilis (strain ATCC 25285 / DSM 2151 / CCUG 4856 / JCM 11019 / LMG 10263 / NCTC 9343 / Onslow / VPI 2553 / EN-2).